The chain runs to 370 residues: Cytochrome b (370 aa).

4 helical membrane-spanning segments follow: residues 25 to 45 (FGSM…FLAV), 69 to 90 (WLMQ…YIHI), 105 to 125 (WLSG…GYVL), and 170 to 190 (FFAL…LHIM). Heme b is bound by residues histidine 75 and histidine 89. Positions 174 and 188 each coordinate heme b. Residue histidine 193 coordinates a ubiquinone. A run of 4 helical transmembrane segments spans residues 218–238 (YKDL…VSFF), 280–300 (LGGA…PFTH), 312–332 (FMQL…WTAT), and 339–358 (FTTI…ISNP).

This sequence belongs to the cytochrome b family. In terms of assembly, the cytochrome bc1 complex contains 3 respiratory subunits (MT-CYB, CYC1 and UQCRFS1), 2 core proteins (UQCRC1 and UQCRC2) and probably 6 low-molecular weight proteins. Heme b is required as a cofactor.

The protein resides in the mitochondrion inner membrane. Its function is as follows. Component of the ubiquinol-cytochrome c reductase complex (complex III or cytochrome b-c1 complex) that is part of the mitochondrial respiratory chain. The b-c1 complex mediates electron transfer from ubiquinol to cytochrome c. Contributes to the generation of a proton gradient across the mitochondrial membrane that is then used for ATP synthesis. This is Cytochrome b (MT-CYB) from Chilabothrus fordii (Ford's boa).